The primary structure comprises 76 residues: Omega-conotoxin-like TeA61 (76 aa).

Positions 1–22 are cleaved as a signal peptide; sequence MKLTCMMIVAVLFLTAWTFATA. The propeptide occupies 23–51; it reads DDSSNGLGNLFLKAHHEMKNPEASKLNER. 3 disulfides stabilise this stretch: cysteine 52–cysteine 67, cysteine 59–cysteine 70, and cysteine 66–cysteine 75.

Belongs to the conotoxin O1 superfamily. Expressed by the venom duct.

Its subcellular location is the secreted. Its function is as follows. Omega-conotoxins act at presynaptic membranes, they bind and block voltage-gated calcium channels (Cav). This Conus textile (Cloth-of-gold cone) protein is Omega-conotoxin-like TeA61.